The primary structure comprises 420 residues: Gamma-glutamyl phosphate reductase (420 aa).

Belongs to the gamma-glutamyl phosphate reductase family.

Its subcellular location is the cytoplasm. The enzyme catalyses L-glutamate 5-semialdehyde + phosphate + NADP(+) = L-glutamyl 5-phosphate + NADPH + H(+). The protein operates within amino-acid biosynthesis; L-proline biosynthesis; L-glutamate 5-semialdehyde from L-glutamate: step 2/2. Catalyzes the NADPH-dependent reduction of L-glutamate 5-phosphate into L-glutamate 5-semialdehyde and phosphate. The product spontaneously undergoes cyclization to form 1-pyrroline-5-carboxylate. The polypeptide is Gamma-glutamyl phosphate reductase (Streptococcus pneumoniae serotype 19F (strain G54)).